The primary structure comprises 29 residues: NAD(P)H-quinone oxidoreductase subunit 5, chloroplastic (29 aa).

The chain crosses the membrane as a helical span at residues 1 to 15 (SGSIIHSMEANVGYS).

Belongs to the complex I subunit 5 family. NDH is composed of at least 16 different subunits, 5 of which are encoded in the nucleus.

The protein localises to the plastid. Its subcellular location is the chloroplast thylakoid membrane. It carries out the reaction a plastoquinone + NADH + (n+1) H(+)(in) = a plastoquinol + NAD(+) + n H(+)(out). The catalysed reaction is a plastoquinone + NADPH + (n+1) H(+)(in) = a plastoquinol + NADP(+) + n H(+)(out). Its function is as follows. NDH shuttles electrons from NAD(P)H:plastoquinone, via FMN and iron-sulfur (Fe-S) centers, to quinones in the photosynthetic chain and possibly in a chloroplast respiratory chain. The immediate electron acceptor for the enzyme in this species is believed to be plastoquinone. Couples the redox reaction to proton translocation, and thus conserves the redox energy in a proton gradient. The chain is NAD(P)H-quinone oxidoreductase subunit 5, chloroplastic from Pseudotsuga menziesii (Douglas-fir).